The sequence spans 733 residues: Serine/threonine-protein kinase ATG1c (733 aa).

In terms of domain architecture, Protein kinase spans 12 to 269; it reads YLVGRQIGSG…FEEFFNHPFL (258 aa). ATP contacts are provided by residues 18 to 26 and lysine 41; that span reads IGSGSFSVV. Residue aspartate 134 is the Proton acceptor of the active site. Disordered stretches follow at residues 292 to 363 and 379 to 414; these read SSGS…ELTS and FETQINSDRRNRREPTGLTDSRSLIAPGRVDDSQDS. Residues 329 to 339 are compositionally biased toward polar residues; that stretch reads KKTSSMKSSSG. Basic and acidic residues-rich tracts occupy residues 342–360 and 379–393; these read VDTRIERKEVESSPLKHTE and FETQINSDRRNRREP. An AIM (Atg8-family-interacting motif) motif is present at residues 419 to 422; the sequence is FVLV. Disordered stretches follow at residues 565-596 and 713-733; these read GSPSQDINKLRSSSLKHDTHSSNKVTDLSHDG and HRRSSAGQMQGSSLAMMNRQS. The span at 566–577 shows a compositional bias: polar residues; sequence SPSQDINKLRSS. The span at 579–596 shows a compositional bias: basic and acidic residues; the sequence is LKHDTHSSNKVTDLSHDG. Over residues 717 to 733 the composition is skewed to polar residues; it reads SAGQMQGSSLAMMNRQS.

Belongs to the protein kinase superfamily. Ser/Thr protein kinase family.

It is found in the cytoplasmic vesicle. The protein resides in the autophagosome. Functionally, serine/threonine protein kinase involved in autophagy. The ATG1-ATG13 protein kinase complex regulates downstream events required for autophagosome enclosure and/or vacuolar delivery. The protein is Serine/threonine-protein kinase ATG1c of Arabidopsis thaliana (Mouse-ear cress).